A 557-amino-acid chain; its full sequence is 2-isopropylmalate synthase (557 aa).

The region spanning 33–307 (PIWCSSDLRD…DPQLDFSDID (275 aa)) is the Pyruvate carboxyltransferase domain. Aspartate 42, histidine 246, histidine 248, and asparagine 282 together coordinate Mg(2+). The regulatory domain stretch occupies residues 439-557 (ANAPYALVSH…SLSQQQAKAA (119 aa)).

Belongs to the alpha-IPM synthase/homocitrate synthase family. LeuA type 2 subfamily. In terms of assembly, homodimer. Mg(2+) serves as cofactor.

It localises to the cytoplasm. The catalysed reaction is 3-methyl-2-oxobutanoate + acetyl-CoA + H2O = (2S)-2-isopropylmalate + CoA + H(+). The protein operates within amino-acid biosynthesis; L-leucine biosynthesis; L-leucine from 3-methyl-2-oxobutanoate: step 1/4. Catalyzes the condensation of the acetyl group of acetyl-CoA with 3-methyl-2-oxobutanoate (2-ketoisovalerate) to form 3-carboxy-3-hydroxy-4-methylpentanoate (2-isopropylmalate). The protein is 2-isopropylmalate synthase of Pseudomonas entomophila (strain L48).